Reading from the N-terminus, the 71-residue chain is cAMP-dependent protein kinase inhibitor beta (71 aa).

Positions 1 to 21 (MTDVESVISSFASSARAGRRN) are disordered. Residue Thr-2 is modified to Blocked amino end (Thr). At Ser-35 the chain carries Phosphoserine. The segment at 51–71 (AKMKNEEKDQGQPKKPLDEDK) is disordered.

Belongs to the PKI family. In terms of tissue distribution, testis.

In terms of biological role, extremely potent competitive inhibitor of cAMP-dependent protein kinase activity, this protein interacts with the catalytic subunit of the enzyme after the cAMP-induced dissociation of its regulatory chains. The protein is cAMP-dependent protein kinase inhibitor beta (Pkib) of Rattus norvegicus (Rat).